The chain runs to 368 residues: tRNA-specific 2-thiouridylase MnmA (368 aa).

ATP is bound by residues 11–18 and Met37; that span reads GMSGGVDS. The interval 97–99 is interaction with target base in tRNA; that stretch reads NPD. The active-site Nucleophile is the Cys102. The cysteines at positions 102 and 199 are disulfide-linked. ATP is bound at residue Gly127. Residues 149–151 are interaction with tRNA; the sequence is KDQ. The active-site Cysteine persulfide intermediate is the Cys199. The tract at residues 311–312 is interaction with tRNA; it reads RY.

Belongs to the MnmA/TRMU family. As to quaternary structure, interacts with TusE.

The protein resides in the cytoplasm. The catalysed reaction is S-sulfanyl-L-cysteinyl-[protein] + uridine(34) in tRNA + AH2 + ATP = 2-thiouridine(34) in tRNA + L-cysteinyl-[protein] + A + AMP + diphosphate + H(+). Functionally, catalyzes the 2-thiolation of uridine at the wobble position (U34) of tRNA(Lys), tRNA(Glu) and tRNA(Gln), leading to the formation of s(2)U34, the first step of tRNA-mnm(5)s(2)U34 synthesis. Sulfur is provided by IscS, via a sulfur-relay system. Binds ATP and its substrate tRNAs. This is tRNA-specific 2-thiouridylase MnmA from Salmonella choleraesuis (strain SC-B67).